Reading from the N-terminus, the 562-residue chain is Eukaryotic translation initiation factor 3 subunit L (562 aa).

The PCI domain maps to 329 to 535 (DAIRVFANIL…IHIADTKVAR (207 aa)).

The protein belongs to the eIF-3 subunit L family. In terms of assembly, component of the eukaryotic translation initiation factor 3 (eIF-3) complex, which is composed of 13 subunits: eif3a, eif3b, eif3c, eif3d, eif3e, eif3f, eif3g, eif3h, eif3i, eif3j, eif3k, eif3l and eif3m.

Its subcellular location is the cytoplasm. Component of the eukaryotic translation initiation factor 3 (eIF-3) complex, which is involved in protein synthesis of a specialized repertoire of mRNAs and, together with other initiation factors, stimulates binding of mRNA and methionyl-tRNAi to the 40S ribosome. The eIF-3 complex specifically targets and initiates translation of a subset of mRNAs involved in cell proliferation. The chain is Eukaryotic translation initiation factor 3 subunit L (eif3l) from Xenopus tropicalis (Western clawed frog).